Consider the following 130-residue polypeptide: Albumin-1 C (130 aa).

Residues 1 to 26 form the signal peptide; it reads MASVKLASLIVLFATLGMFLTKNVGA. Cystine bridges form between Cys29-Cys46, Cys33-Cys48, and Cys41-Cys58. 2 consecutive propeptides follow at residues 64 to 69 and 123 to 130; these read VFLRTN and LLKSVSTA.

Post-translationally, the C-terminal glycine may be removed from PA1b. In terms of tissue distribution, major component of both the cotyledons and embryonic axes of mature seeds.

In terms of biological role, PA1b binds to basic 7S globulin (BG) and stimulates its phosphorylation activity. Involved in the signal transduction system to regulate the growth and differentiation as a hormone peptide. Toxic to various insects through binding to a high affinity binding site in the insect gut. This Pisum sativum (Garden pea) protein is Albumin-1 C.